Consider the following 202-residue polypeptide: NAD(P)H-quinone oxidoreductase subunit I (202 aa).

2 4Fe-4S ferredoxin-type domains span residues Gly55–Val84 and Lys95–Glu124. Positions 64, 67, 70, 74, 104, 107, 110, and 114 each coordinate [4Fe-4S] cluster. Residues Glu168–Glu187 show a composition bias toward basic and acidic residues. The disordered stretch occupies residues Glu168 to Asn202.

Belongs to the complex I 23 kDa subunit family. In terms of assembly, NDH-1 is composed of at least 11 different subunits. [4Fe-4S] cluster is required as a cofactor.

The protein resides in the cellular thylakoid membrane. It catalyses the reaction a plastoquinone + NADH + (n+1) H(+)(in) = a plastoquinol + NAD(+) + n H(+)(out). The catalysed reaction is a plastoquinone + NADPH + (n+1) H(+)(in) = a plastoquinol + NADP(+) + n H(+)(out). In terms of biological role, NDH-1 shuttles electrons from an unknown electron donor, via FMN and iron-sulfur (Fe-S) centers, to quinones in the respiratory and/or the photosynthetic chain. The immediate electron acceptor for the enzyme in this species is believed to be plastoquinone. Couples the redox reaction to proton translocation, and thus conserves the redox energy in a proton gradient. The sequence is that of NAD(P)H-quinone oxidoreductase subunit I from Synechococcus elongatus (strain ATCC 33912 / PCC 7942 / FACHB-805) (Anacystis nidulans R2).